Consider the following 64-residue polypeptide: Cytochrome c oxidase subunit 2 (64 aa).

The Mitochondrial intermembrane portion of the chain corresponds to 1–14 (MAHPSQLGFQDAAS). Residues 15–45 (PVMEELXHFHDHTLMIVFLISTLVXYIIVAM) form a helical membrane-spanning segment. Over 46–64 (VSTKLTNKYVLDSQEIEIV) the chain is Mitochondrial matrix.

The protein belongs to the cytochrome c oxidase subunit 2 family. In terms of assembly, component of the cytochrome c oxidase (complex IV, CIV), a multisubunit enzyme composed of 14 subunits. The complex is composed of a catalytic core of 3 subunits MT-CO1, MT-CO2 and MT-CO3, encoded in the mitochondrial DNA, and 11 supernumerary subunits COX4I, COX5A, COX5B, COX6A, COX6B, COX6C, COX7A, COX7B, COX7C, COX8 and NDUFA4, which are encoded in the nuclear genome. The complex exists as a monomer or a dimer and forms supercomplexes (SCs) in the inner mitochondrial membrane with NADH-ubiquinone oxidoreductase (complex I, CI) and ubiquinol-cytochrome c oxidoreductase (cytochrome b-c1 complex, complex III, CIII), resulting in different assemblies (supercomplex SCI(1)III(2)IV(1) and megacomplex MCI(2)III(2)IV(2)). Found in a complex with TMEM177, COA6, COX18, COX20, SCO1 and SCO2. Interacts with TMEM177 in a COX20-dependent manner. Interacts with COX20. Interacts with COX16. Requires Cu cation as cofactor.

It is found in the mitochondrion inner membrane. The catalysed reaction is 4 Fe(II)-[cytochrome c] + O2 + 8 H(+)(in) = 4 Fe(III)-[cytochrome c] + 2 H2O + 4 H(+)(out). Component of the cytochrome c oxidase, the last enzyme in the mitochondrial electron transport chain which drives oxidative phosphorylation. The respiratory chain contains 3 multisubunit complexes succinate dehydrogenase (complex II, CII), ubiquinol-cytochrome c oxidoreductase (cytochrome b-c1 complex, complex III, CIII) and cytochrome c oxidase (complex IV, CIV), that cooperate to transfer electrons derived from NADH and succinate to molecular oxygen, creating an electrochemical gradient over the inner membrane that drives transmembrane transport and the ATP synthase. Cytochrome c oxidase is the component of the respiratory chain that catalyzes the reduction of oxygen to water. Electrons originating from reduced cytochrome c in the intermembrane space (IMS) are transferred via the dinuclear copper A center (CU(A)) of subunit 2 and heme A of subunit 1 to the active site in subunit 1, a binuclear center (BNC) formed by heme A3 and copper B (CU(B)). The BNC reduces molecular oxygen to 2 water molecules using 4 electrons from cytochrome c in the IMS and 4 protons from the mitochondrial matrix. This Scaphirhynchus platorynchus (Shovelnose sturgeon) protein is Cytochrome c oxidase subunit 2 (mt-co2).